An 834-amino-acid polypeptide reads, in one-letter code: 5-hydroxytryptamine receptor 2A (834 aa).

Over 1–230 (MAHETSFNDA…TQLLRMAVTS (230 aa)) the chain is Extracellular. The segment at 56-75 (TDDGQLEDTNNNNNSKRYYS) is disordered. N-linked (GlcNAc...) asparagine glycosylation is found at N68, N97, N161, N175, N183, N194, N203, and N209. The chain crosses the membrane as a helical span at residues 231 to 253 (VLLGLMILVTIIGNVFVIAAIIL). The Cytoplasmic portion of the chain corresponds to 254 to 263 (ERNLQNVANY). The helical transmembrane segment at 264–285 (LVASLAVADLFVACLVMPLGAV) threads the bilayer. At 286–300 (YEISQGWILGPELCD) the chain is on the extracellular side. An intrachain disulfide couples C299 to C378. The chain crosses the membrane as a helical span at residues 301–322 (IWTSCDVLCCTASILHLVAIAV). The Cytoplasmic portion of the chain corresponds to 323–341 (DRYWAVTNIDYIHSRTSNR). The helical transmembrane segment at 342–364 (VFMMIFCVWTAAVIVSLAPQFGW) threads the bilayer. Topologically, residues 365–391 (KDPDYLQRIEQQKCMVSQDVSYQVFAT) are extracellular. A helical transmembrane segment spans residues 392-413 (CCTFYVPLLVILALYWKIYQTA). The Cytoplasmic portion of the chain corresponds to 414-752 (RKRIHRRRPR…AKRERKAAKT (339 aa)). 5 disordered regions span residues 420 to 442 (RRPRPVDAAVNNNQPDGGAATDT), 460 to 516 (KTGS…STSG), 531 to 599 (QQGK…SEDQ), 617 to 640 (LEQVQQLQKSVKSGGGGGASTSNA), and 674 to 743 (STLT…TLEA). 2 stretches are compositionally biased toward polar residues: residues 482 to 502 (GNSTNTVNTVEDTEFSSSNVD) and 532 to 542 (QGKSTAKSSAA). A compositionally biased stretch (basic and acidic residues) spans 551-564 (RQEDDGQRPEHGEQ). Over residues 565 to 575 (EDREELEDQDE) the composition is skewed to acidic residues. Low complexity predominate over residues 582–593 (TTATSATTAAGT). Polar residues predominate over residues 674–694 (STLTSCNQSHPLCGTANESPS). The segment covering 702 to 723 (QPTTPQQQPHQQAHQQQQQQQQ) has biased composition (low complexity). The chain crosses the membrane as a helical span at residues 753 to 776 (LAIITGAFVVCWLPFFVMALTMPL). Residues 777-785 (CAACQISDS) are Extracellular-facing. A helical membrane pass occupies residues 786–808 (VASLFLWLGYFNSTLNPVIYTIF). Residues 809 to 834 (SPEFRQAFKRILFGGHRPVHYRSGKL) are Cytoplasmic-facing.

It belongs to the G-protein coupled receptor 1 family.

It localises to the cell membrane. Its function is as follows. This is one of the several different receptors for 5-hydroxytryptamine (serotonin), a biogenic hormone that functions as a neurotransmitter, a hormone, and a mitogen. The activity of this receptor is mediated by G proteins which inhibit adenylate cyclase. The protein is 5-hydroxytryptamine receptor 2A (5-HT1A) of Drosophila melanogaster (Fruit fly).